The following is a 153-amino-acid chain: 6,7-dimethyl-8-ribityllumazine synthase (153 aa).

5-amino-6-(D-ribitylamino)uracil is bound by residues F22, 56 to 58 (AFE), and 80 to 82 (TVI). Residue 85–86 (ST) coordinates (2S)-2-hydroxy-3-oxobutyl phosphate. H88 acts as the Proton donor in catalysis. F113 contacts 5-amino-6-(D-ribitylamino)uracil. R127 serves as a coordination point for (2S)-2-hydroxy-3-oxobutyl phosphate.

This sequence belongs to the DMRL synthase family. In terms of assembly, forms an icosahedral capsid composed of 60 subunits, arranged as a dodecamer of pentamers.

The enzyme catalyses (2S)-2-hydroxy-3-oxobutyl phosphate + 5-amino-6-(D-ribitylamino)uracil = 6,7-dimethyl-8-(1-D-ribityl)lumazine + phosphate + 2 H2O + H(+). The protein operates within cofactor biosynthesis; riboflavin biosynthesis; riboflavin from 2-hydroxy-3-oxobutyl phosphate and 5-amino-6-(D-ribitylamino)uracil: step 1/2. In terms of biological role, catalyzes the formation of 6,7-dimethyl-8-ribityllumazine by condensation of 5-amino-6-(D-ribitylamino)uracil with 3,4-dihydroxy-2-butanone 4-phosphate. This is the penultimate step in the biosynthesis of riboflavin. The polypeptide is 6,7-dimethyl-8-ribityllumazine synthase (Haemophilus ducreyi (strain 35000HP / ATCC 700724)).